A 119-amino-acid polypeptide reads, in one-letter code: UPF0342 protein GK0640 (119 aa).

Belongs to the UPF0342 family.

In Geobacillus kaustophilus (strain HTA426), this protein is UPF0342 protein GK0640.